The sequence spans 916 residues: DNA mismatch repair protein MutS (916 aa).

Position 665–672 (665–672 (GPNMAGKS)) interacts with ATP.

Belongs to the DNA mismatch repair MutS family.

Its function is as follows. This protein is involved in the repair of mismatches in DNA. It is possible that it carries out the mismatch recognition step. This protein has a weak ATPase activity. The polypeptide is DNA mismatch repair protein MutS (Bradyrhizobium sp. (strain ORS 278)).